A 240-amino-acid polypeptide reads, in one-letter code: Phosphoribosylaminoimidazole-succinocarboxamide synthase (240 aa).

It belongs to the SAICAR synthetase family.

It catalyses the reaction 5-amino-1-(5-phospho-D-ribosyl)imidazole-4-carboxylate + L-aspartate + ATP = (2S)-2-[5-amino-1-(5-phospho-beta-D-ribosyl)imidazole-4-carboxamido]succinate + ADP + phosphate + 2 H(+). Its pathway is purine metabolism; IMP biosynthesis via de novo pathway; 5-amino-1-(5-phospho-D-ribosyl)imidazole-4-carboxamide from 5-amino-1-(5-phospho-D-ribosyl)imidazole-4-carboxylate: step 1/2. The protein is Phosphoribosylaminoimidazole-succinocarboxamide synthase of Wolbachia pipientis subsp. Culex pipiens (strain wPip).